A 245-amino-acid polypeptide reads, in one-letter code: uncharacterized protein (245 aa).

The next 6 helical transmembrane spans lie at 38–58 (IYPA…AIFI), 68–88 (TIEL…QGYF), 100–120 (IWSL…LILA), 129–149 (VLFI…FVSA), 194–214 (VNNI…FLMN), and 217–237 (IAFI…LIIH).

It belongs to the acyltransferase 3 family.

The protein localises to the cell membrane. This is an uncharacterized protein from Haemophilus influenzae (strain ATCC 51907 / DSM 11121 / KW20 / Rd).